A 429-amino-acid polypeptide reads, in one-letter code: CinA-like protein (429 aa).

Belongs to the CinA family.

The sequence is that of CinA-like protein from Prochlorococcus marinus (strain MIT 9313).